The following is a 42-amino-acid chain: Photosystem I reaction center subunit IX (42 aa).

A helical transmembrane segment spans residues 7–27; it reads FLSTAPVLIMALLTFTAGLLI.

The protein belongs to the PsaJ family.

It localises to the cellular thylakoid membrane. May help in the organization of the PsaE and PsaF subunits. The polypeptide is Photosystem I reaction center subunit IX (Rippkaea orientalis (strain PCC 8801 / RF-1) (Cyanothece sp. (strain PCC 8801))).